The chain runs to 417 residues: Exodeoxyribonuclease 7 large subunit (417 aa).

Belongs to the XseA family. Heterooligomer composed of large and small subunits.

The protein localises to the cytoplasm. It carries out the reaction Exonucleolytic cleavage in either 5'- to 3'- or 3'- to 5'-direction to yield nucleoside 5'-phosphates.. Bidirectionally degrades single-stranded DNA into large acid-insoluble oligonucleotides, which are then degraded further into small acid-soluble oligonucleotides. This chain is Exodeoxyribonuclease 7 large subunit, found in Lactococcus lactis subsp. lactis (strain IL1403) (Streptococcus lactis).